Here is a 418-residue protein sequence, read N- to C-terminus: Histidine--tRNA ligase (418 aa).

It belongs to the class-II aminoacyl-tRNA synthetase family.

The protein localises to the cytoplasm. The catalysed reaction is tRNA(His) + L-histidine + ATP = L-histidyl-tRNA(His) + AMP + diphosphate + H(+). The polypeptide is Histidine--tRNA ligase (Methanococcus vannielii (strain ATCC 35089 / DSM 1224 / JCM 13029 / OCM 148 / SB)).